Consider the following 243-residue polypeptide: Transmembrane protein 174 (243 aa).

Transmembrane regions (helical) follow at residues 40 to 60 and 73 to 93; these read LLFS…MGWI and LLGP…VCKF. Residues 205 to 229 form a disordered region; it reads AGHDRPSSDADQLEGTQMGEEERVC.

Interacts with SLC34A1; regulates SLC34A1 internalization by PTH and FGF23.

It localises to the endoplasmic reticulum membrane. It is found in the apical cell membrane. Regulator of plasma phosphate homeostasis. Decreases serum inorganic phosphate (Pi) uptake by regulating the sodium-phosphate cotransporter SLC34A1 trafficking by PTH and FGF23 in the kidney. In Rattus norvegicus (Rat), this protein is Transmembrane protein 174 (Tmem174).